A 1402-amino-acid polypeptide reads, in one-letter code: MAEHGESSEDRISEIDYEFLAELSARFGMNLVQLAKSQEEEDHKERMKMKKGFNSQMRSEAKRLKTFESYDTFRSWTPQEMAAAGFYHTGVKLGVQCFCCSLILFGNSLRKLPIERHKKLRPECEFLQGKDVGNIGKYDIRVKSPEKMLRGGKARYHEEEARLESFEDWPFYAHGTSPRVLSAAGFVFTGKRDTVQCFSCGGSLGNWEEGDDPWKEHAKWFPKCEFLQSKKSSEEIAQYIQGYEGFVHVTGEHFVKSWVRRELPMVSAYCNDSVFANEELRMDMFKDWPQESPVGVEALVRAGFFYTGKKDIVRCFSCGGCLEKWAEGDDPMEDHIKFFPECVFLQTLKSSAEVIPTLQSQYALPEATETTRESNHGDAAAVHSTVVDLGRSEAQWFQEARSLSEQLRDTYTKTSFCHMNLPEVCSSLGTDHLLSCDVSIISKHISQPVQGALTIPEVFSNLSSVMCVEGEAGSGKTTFLKRIAFLWASGCCPLLYRFQLVFYLSLSSITPDQGLDNIICTQLLGAGGCISEVCLSSSIQQLQHQVLFLLDDYSGLASLPQALHTLITKNYLFRTCLLIAVHTNRVRDIRPYLGTSLEIQEFPFYNTVFVLRKFFSHDIICVEKLIIYFSENKDLQGVYKTPLFVAAVCNDWNQNASAQDDFQDVTLFHSYMQYLSLKYKATAESLQATVSSCGQLALTGLFSSCFEFNSDDLAEAGVDEDVKLTTFLMSKFTAQRLRPVYRFLGPLFQEFLAAVRLTELLSSDRQEDQDLGLYYLRQIDSPLKAINSFNIFLYYVSSHSSSKAAPTVVSHLLQLVDEKESLENMSENEDYMKLHPQTFLWFQFVRGLWLVSPESFSSFVSEHLLRLALIFAYESNTVAECSPFILQFLRGRTLALRVLNLEYFWDHPESLLLLRSLKVSINGNKMSSYVDYSFKTYFENLQPPAINEEYTSAFEHVSEWRRNFAQDEEIIKNYENIWPRALPDISEGYWNLSPKPCKIPKLEVQVNNMGPADQALLQVLMEVFSASQSIEFHLFNSSGFLESIRPALELSKASVTKCSMSRLELSRAEQELLLTLPALQSLEVSETNQLPDQLFHNLHKFLGLKELCVRLDGKPDVLSVLPEEFLNLHHMEKLSIRTSTESDLSKLVKFIQNFPNLHVFHLKCDFLSNCESLMTALASCKKLREIEFSGQCFEAMTFVNILPNFVSLKILSLKGQQFADKETSEKFAQALGSLRNLEELLVPTGDGIHQVAKLIVRQCLQLPCLRVLAFHDILDDESVIEIGAATSGSFQKLENLDISMNHKITEEGYRNFFQALDNLPNLQMLNICRNIPGRIQVQATTVKALCHCVSRLPSLTRLGMLSWLLDEEDMKVINDVKERHPQSKRLTIFWKWIVPFSPVVLE.

BIR repeat units follow at residues 60–127 (EAKR…CEFL), 159–227 (EEAR…CEFL), and 278–345 (EELR…CVFL). Zn(2+) contacts are provided by Cys315, Cys318, His335, and Cys342. An NACHT domain is found at 464 to 759 (SVMCVEGEAG…EFLAAVRLTE (296 aa)). Lys476 is an ATP binding site.

Prevents motor-neuron apoptosis induced by a variety of signals. This chain is Baculoviral IAP repeat-containing protein 1g (Naip7), found in Mus musculus (Mouse).